Reading from the N-terminus, the 381-residue chain is DNA primase DnaG (381 aa).

The region spanning Asp-173–Ile-259 is the Toprim domain. Mg(2+) contacts are provided by Glu-179, Asp-221, and Asp-223.

This sequence belongs to the archaeal DnaG primase family. Forms a ternary complex with MCM helicase and DNA. Component of the archaeal exosome complex. Requires Mg(2+) as cofactor.

It carries out the reaction ssDNA + n NTP = ssDNA/pppN(pN)n-1 hybrid + (n-1) diphosphate.. RNA polymerase that catalyzes the synthesis of short RNA molecules used as primers for DNA polymerase during DNA replication. Also part of the exosome, which is a complex involved in RNA degradation. Acts as a poly(A)-binding protein that enhances the interaction between heteromeric, adenine-rich transcripts and the exosome. The protein is DNA primase DnaG of Methanothermobacter thermautotrophicus (strain ATCC 29096 / DSM 1053 / JCM 10044 / NBRC 100330 / Delta H) (Methanobacterium thermoautotrophicum).